The following is a 136-amino-acid chain: uncharacterized protein (136 aa).

This is an uncharacterized protein from Frog virus 3 (isolate Goorha) (FV-3).